The following is a 496-amino-acid chain: Squalene epoxidase ERG1 (496 aa).

A helical transmembrane segment spans residues 4–24 (VKYDAIIIGAGVIGPTIATAF). Residues 15–16 (VI), 35–36 (ER), arginine 43, arginine 148, valine 164, aspartate 332, and methionine 345 each bind FAD. The next 2 membrane-spanning stretches (helical) occupy residues 431 to 451 (IGLL…FFSV) and 466 to 486 (LGFP…IVIF).

The protein belongs to the squalene monooxygenase family. The cofactor is FAD.

The protein resides in the microsome membrane. It is found in the endoplasmic reticulum membrane. The enzyme catalyses squalene + reduced [NADPH--hemoprotein reductase] + O2 = (S)-2,3-epoxysqualene + oxidized [NADPH--hemoprotein reductase] + H2O + H(+). It functions in the pathway terpene metabolism; lanosterol biosynthesis; lanosterol from farnesyl diphosphate: step 2/3. Its activity is regulated as follows. Activity is completely abolished by Triton X-100, deoxycholate or Cu(2+), and partially inhibited by thiol reagents, rotenone and antimycin A. The allylamine antimycotic agents naftifine and SF 86-327are potent inhibitors and show apparently non-competitive kinetics with respect to the substrate squalene. In terms of biological role, squalene epoxidase; part of the third module of ergosterol biosynthesis pathway that includes the late steps of the pathway. Erg1 catalyzes the epoxidation of squalene into 2,3-epoxysqualene. The third module or late pathway involves the ergosterol synthesis itself through consecutive reactions that mainly occur in the endoplasmic reticulum (ER) membrane. Firstly, the squalene synthase ERG9 catalyzes the condensation of 2 farnesyl pyrophosphate moieties to form squalene, which is the precursor of all steroids. Squalene synthase is crucial for balancing the incorporation of farnesyl diphosphate (FPP) into sterol and nonsterol isoprene synthesis. Secondly, the squalene epoxidase ERG1 catalyzes the stereospecific oxidation of squalene to (S)-2,3-epoxysqualene, which is considered to be a rate-limiting enzyme in steroid biosynthesis. Then, the lanosterol synthase ERG7 catalyzes the cyclization of (S)-2,3 oxidosqualene to lanosterol, a reaction that forms the sterol core. In the next steps, lanosterol is transformed to zymosterol through a complex process involving various demethylation, reduction and desaturation reactions. The lanosterol 14-alpha-demethylase ERG11 (also known as CYP51) catalyzes C14-demethylation of lanosterol to produce 4,4'-dimethyl cholesta-8,14,24-triene-3-beta-ol, which is critical for ergosterol biosynthesis. The C-14 reductase ERG24 reduces the C14=C15 double bond of 4,4-dimethyl-cholesta-8,14,24-trienol to produce 4,4-dimethyl-cholesta-8,24-dienol. 4,4-dimethyl-cholesta-8,24-dienol is substrate of the C-4 demethylation complex ERG25-ERG26-ERG27 in which ERG25 catalyzes the three-step monooxygenation required for the demethylation of 4,4-dimethyl and 4alpha-methylsterols, ERG26 catalyzes the oxidative decarboxylation that results in a reduction of the 3-beta-hydroxy group at the C-3 carbon to an oxo group, and ERG27 is responsible for the reduction of the keto group on the C-3. ERG28 has a role as a scaffold to help anchor ERG25, ERG26 and ERG27 to the endoplasmic reticulum and ERG29 regulates the activity of the iron-containing C4-methylsterol oxidase ERG25. Then, the sterol 24-C-methyltransferase ERG6 catalyzes the methyl transfer from S-adenosyl-methionine to the C-24 of zymosterol to form fecosterol. The C-8 sterol isomerase ERG2 catalyzes the reaction which results in unsaturation at C-7 in the B ring of sterols and thus converts fecosterol to episterol. The sterol-C5-desaturase ERG3 then catalyzes the introduction of a C-5 double bond in the B ring to produce 5-dehydroepisterol. The C-22 sterol desaturase ERG5 further converts 5-dehydroepisterol into ergosta-5,7,22,24(28)-tetraen-3beta-ol by forming the C-22(23) double bond in the sterol side chain. Finally, ergosta-5,7,22,24(28)-tetraen-3beta-ol is substrate of the C-24(28) sterol reductase ERG4 to produce ergosterol. This chain is Squalene epoxidase ERG1, found in Candida albicans (strain SC5314 / ATCC MYA-2876) (Yeast).